The sequence spans 401 residues: Elongation factor Tu (401 aa).

In terms of domain architecture, tr-type G spans 10 to 209; it reads KPHINVGTIG…AVDEYIPTPQ (200 aa). The interval 19–26 is G1; it reads GHVDHGKT. 19 to 26 is a GTP binding site; sequence GHVDHGKT. Threonine 26 lines the Mg(2+) pocket. The G2 stretch occupies residues 60–64; sequence GITIA. A G3 region spans residues 81-84; that stretch reads DCPG. Residues 81–85 and 136–139 each bind GTP; these read DCPGH and NKVD. Residues 136–139 are G4; that stretch reads NKVD. The segment at 174-176 is G5; sequence SAR.

Belongs to the TRAFAC class translation factor GTPase superfamily. Classic translation factor GTPase family. EF-Tu/EF-1A subfamily. In terms of assembly, monomer.

It localises to the cytoplasm. It catalyses the reaction GTP + H2O = GDP + phosphate + H(+). Functionally, GTP hydrolase that promotes the GTP-dependent binding of aminoacyl-tRNA to the A-site of ribosomes during protein biosynthesis. The chain is Elongation factor Tu from Chloroflexus aurantiacus (strain ATCC 29366 / DSM 635 / J-10-fl).